The primary structure comprises 1500 residues: Secreted chitinase LysM12 (1500 aa).

The first 23 residues, 1–23 (MAPLWNGMAAGLLLSAAVVSGQA), serve as a signal peptide directing secretion. N-linked (GlcNAc...) asparagine glycosylation is found at Asn53, Asn225, Asn251, and Asn270. 2 consecutive LysM domains span residues 303–348 (RTQK…HVCC) and 367–415 (ATTT…VICI). The 69-residue stretch at 428-496 (DAECGPQVPG…TNGCISHCGM (69 aa)) folds into the Chitin-binding type-1 domain. 4 disulfides stabilise this stretch: Cys431-Cys459, Cys453-Cys465, Cys458-Cys472, and Cys490-Cys494. A GH18 domain is found at 507–879 (FRSVGYYESY…PGMILQMKSG (373 aa)). Catalysis depends on Glu625, which acts as the Proton donor. A chitin-binding site is contributed by Tyr626. N-linked (GlcNAc...) asparagine glycans are attached at residues Asn721 and Asn800. A chitin-binding site is contributed by Trp852. N-linked (GlcNAc...) asparagine glycosylation is found at Asn892 and Asn983. The disordered stretch occupies residues 1164 to 1193 (IPKDIPYPDKTKRKDKDDDDNKKTEATDSE). The segment covering 1169–1193 (PYPDKTKRKDKDDDDNKKTEATDSE) has biased composition (basic and acidic residues).

This sequence belongs to the glycosyl hydrolase 18 family. Chitinase class V subfamily.

Its subcellular location is the secreted. It carries out the reaction Random endo-hydrolysis of N-acetyl-beta-D-glucosaminide (1-&gt;4)-beta-linkages in chitin and chitodextrins.. Functionally, secreted chitinase involved in the degradation of chitin, a component of the cell walls of fungi and exoskeletal elements of some animals (including worms and arthropods). Involved in pathogenesis via manipulation of host defenses for successful infection. This Penicillium expansum (Blue mold rot fungus) protein is Secreted chitinase LysM12.